The following is a 204-amino-acid chain: Cytochrome P450 monooxygenase PC-23 (204 aa).

Position 138 (cysteine 138) interacts with heme.

The protein belongs to the cytochrome P450 family. Heme serves as cofactor.

The protein operates within secondary metabolite biosynthesis. Cytochrome P450 monooxygenase; part of the gene cluster that mediates the biosynthesis of the indole diterpenes penitrems. The geranylgeranyl diphosphate (GGPP) synthase penG catalyzes the first step in penitrem biosynthesis via conversion of farnesyl pyrophosphate and isopentyl pyrophosphate into geranylgeranyl pyrophosphate (GGPP). Condensation of indole-3-glycerol phosphate with GGPP by the prenyl transferase penC then forms 3-geranylgeranylindole (3-GGI). Epoxidation by the FAD-dependent monooxygenase penM leads to a epoxidized-GGI that is substrate of the terpene cyclase penB for cyclization to yield paspaline. Paspaline is subsequently converted to 13-desoxypaxilline by the cytochrome P450 monooxygenase penP, the latter being then converted to paxilline by the cytochrome P450 monooxygenase penQ. Paxilline is converted to beta-paxitriol via C-10 ketoreduction by the short-chain dehydrogenase PC-15 which can be monoprenylated at the C-20 by the indole diterpene prenyltransferase penD. A two-step elimination (acetylation and elimination) process performed by the O-acetyltransferase PC-16 and the P.simplicissimum ptmI-ortholog not yet identified in P.crustosum, leads to the production of the prenylated form of penijanthine. The FAD-linked oxidoreductase ptmO then converts the prenylated form of penijanthine into PC-M5 which is in turn transformed into PC-M4 by the aromatic dimethylallyltransferase PC-22. A series of oxidation steps involving 4 cytochrome P450 monooxygenases (PC-21, PC-05, PC-23, PC-20) and a FAD-dependent monooxygenase (PC-14) are required for the transformation of PC-M4 to penitrems A and E. Synthesis of these final products is proposed to proceed via penitrems D and C (PC-21, PC-05, PC-14) and penitrems B and F (PC-21, PC-05, PC-14, PC-23). This chain is Cytochrome P450 monooxygenase PC-23, found in Penicillium crustosum (Blue mold fungus).